Here is a 144-residue protein sequence, read N- to C-terminus: UPF0102 protein BURPS1106A_3900 (144 aa).

Residues 1-28 (MCHAREASPGTGEPEAAPRDNFPRAAGS) are disordered.

It belongs to the UPF0102 family.

This chain is UPF0102 protein BURPS1106A_3900, found in Burkholderia pseudomallei (strain 1106a).